The sequence spans 110 residues: U1-lycotoxin-Ls1kk (110 aa).

The N-terminal stretch at Met-1–Ala-20 is a signal peptide. Positions Glu-21–Arg-44 are excised as a propeptide. 4 cysteine pairs are disulfide-bonded: Cys-47-Cys-62, Cys-54-Cys-71, Cys-61-Cys-89, and Cys-73-Cys-87.

It belongs to the neurotoxin 19 (CSTX) family. 03 subfamily. In terms of tissue distribution, expressed by the venom gland.

The protein resides in the secreted. The sequence is that of U1-lycotoxin-Ls1kk from Lycosa singoriensis (Wolf spider).